Reading from the N-terminus, the 100-residue chain is Sec-independent protein translocase protein TatA (100 aa).

Residues 1–21 (MGALKPWHIAVLVVVLILLFG) traverse the membrane as a helical segment. The segment covering 44–55 (KSLHDDDRDLAE) has biased composition (basic and acidic residues). The tract at residues 44–100 (KSLHDDDRDLAEKANAQAGYQPLPPQVQQEPYPQQTPYQAPPQQQPVVDPVQRARDS) is disordered. The segment covering 69–81 (QVQQEPYPQQTPY) has biased composition (low complexity).

The protein belongs to the TatA/E family. As to quaternary structure, the Tat system comprises two distinct complexes: a TatABC complex, containing multiple copies of TatA, TatB and TatC subunits, and a separate TatA complex, containing only TatA subunits. Substrates initially bind to the TatABC complex, which probably triggers association of the separate TatA complex to form the active translocon.

Its subcellular location is the cell membrane. Its function is as follows. Part of the twin-arginine translocation (Tat) system that transports large folded proteins containing a characteristic twin-arginine motif in their signal peptide across membranes. TatA could form the protein-conducting channel of the Tat system. The protein is Sec-independent protein translocase protein TatA of Salinispora arenicola (strain CNS-205).